The sequence spans 485 residues: MMRYGSAATVTTSETASSQKPGGVCRLRLTLPAEASLRPKQEEINRDTSVNADIRSTNERRKKRNGYVLSEKNTAEPPTLHLYTIPKNNTPSAVASSGVVYGVVQRAENNHQNEVVVYEWSTNQLKEEMNYIKDVRGTLEKIREKMFGEYDEMKQKVKQLTQEIKVSSVQKEFLESHSQAQSTALDTFGTINSSLNAASIEMQKTLVDMTLENTNIKDEMKNIKHSYEESLVRLKEKQQLLDSAQNENQLLKVKIESSQEANAEVMREMTRKLYSQYEEKLRQEELKYTAEKDMLVDQTRQYLKAIEDASEKVRLAENKIEERDAKIAELDKLVHRMEQEREHLQDQLIRHEERIQDLDNRMQMQSPDRNQRLEEVATSLRERIKHLDDMVHCQQKKVKHMIEEIELLKKKVHYKDLLIQQLLERIAFLEGENTELQDKVDYLMANKPKTDKETKDIGTSCNLSESQRILTVCVTENEARSIFSI.

Over residues 1–18 (MMRYGSAATVTTSETASS) the composition is skewed to low complexity. Disordered regions lie at residues 1-21 (MMRYGSAATVTTSETASSQKP) and 40-65 (KQEEINRDTSVNADIRSTNERRKKRN).

Belongs to the MYZAP family.

This is Myocardial zonula adherens protein (myzap) from Xenopus tropicalis (Western clawed frog).